Consider the following 379-residue polypeptide: Queuine tRNA-ribosyltransferase (379 aa).

Catalysis depends on Asp-94, which acts as the Proton acceptor. Residues 94–98, Asp-148, Gln-191, and Gly-218 each bind substrate; that span reads DSGGF. The segment at 249 to 255 is RNA binding; that stretch reads GVGSPDS. The Nucleophile role is filled by Asp-268. The interval 273 to 277 is RNA binding; important for wobble base 34 recognition; the sequence is TRIAR. Residues Cys-306, Cys-308, Cys-311, and His-337 each coordinate Zn(2+).

The protein belongs to the queuine tRNA-ribosyltransferase family. In terms of assembly, homodimer. Within each dimer, one monomer is responsible for RNA recognition and catalysis, while the other monomer binds to the replacement base PreQ1. Zn(2+) is required as a cofactor.

It carries out the reaction 7-aminomethyl-7-carbaguanine + guanosine(34) in tRNA = 7-aminomethyl-7-carbaguanosine(34) in tRNA + guanine. The protein operates within tRNA modification; tRNA-queuosine biosynthesis. Catalyzes the base-exchange of a guanine (G) residue with the queuine precursor 7-aminomethyl-7-deazaguanine (PreQ1) at position 34 (anticodon wobble position) in tRNAs with GU(N) anticodons (tRNA-Asp, -Asn, -His and -Tyr). Catalysis occurs through a double-displacement mechanism. The nucleophile active site attacks the C1' of nucleotide 34 to detach the guanine base from the RNA, forming a covalent enzyme-RNA intermediate. The proton acceptor active site deprotonates the incoming PreQ1, allowing a nucleophilic attack on the C1' of the ribose to form the product. After dissociation, two additional enzymatic reactions on the tRNA convert PreQ1 to queuine (Q), resulting in the hypermodified nucleoside queuosine (7-(((4,5-cis-dihydroxy-2-cyclopenten-1-yl)amino)methyl)-7-deazaguanosine). The polypeptide is Queuine tRNA-ribosyltransferase (Bacillus cereus (strain Q1)).